The following is a 268-amino-acid chain: Thiazole synthase (268 aa).

Residue lysine 108 is the Schiff-base intermediate with DXP of the active site. Residues glycine 169, 195–196 (AG), and 217–218 (NS) contribute to the 1-deoxy-D-xylulose 5-phosphate site. The disordered stretch occupies residues 248 to 268 (RLKENPLASPSSPLDGVISNN). Polar residues predominate over residues 255–268 (ASPSSPLDGVISNN).

This sequence belongs to the ThiG family. In terms of assembly, homotetramer. Forms heterodimers with either ThiH or ThiS.

The protein resides in the cytoplasm. It catalyses the reaction [ThiS sulfur-carrier protein]-C-terminal-Gly-aminoethanethioate + 2-iminoacetate + 1-deoxy-D-xylulose 5-phosphate = [ThiS sulfur-carrier protein]-C-terminal Gly-Gly + 2-[(2R,5Z)-2-carboxy-4-methylthiazol-5(2H)-ylidene]ethyl phosphate + 2 H2O + H(+). It functions in the pathway cofactor biosynthesis; thiamine diphosphate biosynthesis. Catalyzes the rearrangement of 1-deoxy-D-xylulose 5-phosphate (DXP) to produce the thiazole phosphate moiety of thiamine. Sulfur is provided by the thiocarboxylate moiety of the carrier protein ThiS. In vitro, sulfur can be provided by H(2)S. The chain is Thiazole synthase from Prochlorococcus marinus (strain NATL2A).